The following is a 165-amino-acid chain: DNA mimic protein DMP19 (165 aa).

This sequence belongs to the DMP19-like protein family. Monomer. Homodimer. The monomeric form of DMP19 interacts with the DNA-binding protein HU homodimer with 1:1 stoichiometry. The dimeric form of DMP19 interacts with the Neisseria hypothetical transcription factor (NHTF) dimer.

Activity can be modulated in vitro by crown ethers, which are small cyclic polyethers that can modify protein surface behavior dramatically by stabilizing either intra- or intermolecular interactions, thereby probably altering the protein's tertiary and quaternary structure. Its function is as follows. Acts as a DNA mimic. Interacts with DNA-binding proteins and prevents their binding to DNA by occupying the DNA binding sites on the proteins, acting as a competitive inhibitor. DMP19 is a bifunctional DNA mimic protein involved in controlling nucleoid formation as well as gene regulation. This bifunctionality depends on different oligomeric states. The monomeric form interacts with the DNA-binding protein HU, which prevents HU from binding to DNA and forming nucleoids. The dimeric form interacts with the Neisseria hypothetical transcription factor (NHTF) and prevents NHTF from binding to its DNA-binding sites, thereby blocking its repressor activity and influencing expression of the target genes. DMP19 might use these different oligomerizations to regulate genes in two steps: the monomeric form may first release selected gene regions in chromosomal DNA by preventing HU from binding to DNA and forming nucleoids, then the dimeric form blocks the gene repressor activity of NHTF and ensures the continued expression of NHTF-controlled genes. The protein is DNA mimic protein DMP19 of Neisseria meningitidis serogroup B (strain ATCC BAA-335 / MC58).